The sequence spans 322 residues: Protein farnesyltransferase/geranylgeranyltransferase type-1 subunit alpha (322 aa).

Positions Met-1–Gln-27 are disordered. PFTA repeat units lie at residues Arg-62–Glu-95, Gln-103–Asp-136, Lys-138–Asn-171, Glu-173–Pro-205, Arg-213–Thr-246, and Asn-287–Ile-321.

Belongs to the protein prenyltransferase subunit alpha family. As to quaternary structure, heterodimer of fntA and fntB (farnesyltransferase). Heterodimer of an alpha and a beta subunit. Mg(2+) is required as a cofactor.

The enzyme catalyses L-cysteinyl-[protein] + (2E,6E)-farnesyl diphosphate = S-(2E,6E)-farnesyl-L-cysteinyl-[protein] + diphosphate. The catalysed reaction is geranylgeranyl diphosphate + L-cysteinyl-[protein] = S-geranylgeranyl-L-cysteinyl-[protein] + diphosphate. Functionally, catalyzes the transfer of a farnesyl or geranyl-geranyl moiety from farnesyl or geranyl-geranyl diphosphate to a cysteine at the fourth position from the C-terminus of several proteins having the C-terminal sequence Cys-aliphatic-aliphatic-X. The alpha subunit is thought to participate in a stable complex with the substrate. The beta subunit binds the peptide substrate. The chain is Protein farnesyltransferase/geranylgeranyltransferase type-1 subunit alpha (fntA) from Dictyostelium discoideum (Social amoeba).